The primary structure comprises 974 residues: UvrABC system protein A (974 aa).

34–41 (GLSGSGKS) is an ATP binding site. 2 ABC transporter domains span residues 331–610 (WARS…TNSL) and 630–959 (ISKT…QFLK). Residue 663–670 (GVSGGGKS) participates in ATP binding. Residues 762-788 (CEACQGDGVIKIEMHFLPDVYVTCDVC) form a C4-type zinc finger.

It belongs to the ABC transporter superfamily. UvrA family. Forms a heterotetramer with UvrB during the search for lesions.

The protein localises to the cytoplasm. The UvrABC repair system catalyzes the recognition and processing of DNA lesions. UvrA is an ATPase and a DNA-binding protein. A damage recognition complex composed of 2 UvrA and 2 UvrB subunits scans DNA for abnormalities. When the presence of a lesion has been verified by UvrB, the UvrA molecules dissociate. The polypeptide is UvrABC system protein A (Brucella abortus (strain 2308)).